Reading from the N-terminus, the 167-residue chain is G/U mismatch-specific DNA glycosylase (167 aa).

Belongs to the uracil-DNA glycosylase (UDG) superfamily. TDG/mug family. Binds DNA as a monomer.

Its subcellular location is the cytoplasm. It carries out the reaction Specifically hydrolyzes mismatched double-stranded DNA and polynucleotides, releasing free uracil.. In terms of biological role, excises ethenocytosine and uracil, which can arise by alkylation or deamination of cytosine, respectively, from the corresponding mispairs with guanine in ds-DNA. It is capable of hydrolyzing the carbon-nitrogen bond between the sugar-phosphate backbone of the DNA and the mispaired base. The complementary strand guanine functions in substrate recognition. Required for DNA damage lesion repair in stationary-phase cells. This is G/U mismatch-specific DNA glycosylase from Pectobacterium atrosepticum (strain SCRI 1043 / ATCC BAA-672) (Erwinia carotovora subsp. atroseptica).